Reading from the N-terminus, the 455-residue chain is Probable glycine dehydrogenase (decarboxylating) subunit 1 (455 aa).

Belongs to the GcvP family. N-terminal subunit subfamily. In terms of assembly, the glycine cleavage system is composed of four proteins: P, T, L and H. In this organism, the P 'protein' is a heterodimer of two subunits.

It carries out the reaction N(6)-[(R)-lipoyl]-L-lysyl-[glycine-cleavage complex H protein] + glycine + H(+) = N(6)-[(R)-S(8)-aminomethyldihydrolipoyl]-L-lysyl-[glycine-cleavage complex H protein] + CO2. In terms of biological role, the glycine cleavage system catalyzes the degradation of glycine. The P protein binds the alpha-amino group of glycine through its pyridoxal phosphate cofactor; CO(2) is released and the remaining methylamine moiety is then transferred to the lipoamide cofactor of the H protein. This Francisella tularensis subsp. novicida (strain U112) protein is Probable glycine dehydrogenase (decarboxylating) subunit 1.